A 140-amino-acid chain; its full sequence is Organic hydroperoxide resistance protein-like (140 aa).

The protein belongs to the OsmC/Ohr family.

The sequence is that of Organic hydroperoxide resistance protein-like from Staphylococcus aureus (strain bovine RF122 / ET3-1).